Here is a 374-residue protein sequence, read N- to C-terminus: Chaperone protein DnaJ (374 aa).

Residues 5–70 (DFYEILGVSK…EKRSAYDRMG (66 aa)) form the J domain. The CR-type zinc-finger motif lies at 133–211 (GCKKEISFTA…CHGNGVKDKS (79 aa)). Residues C146, C149, C163, C166, C185, C188, C199, and C202 each contribute to the Zn(2+) site. 4 CXXCXGXG motif repeats span residues 146–153 (CDTCDGKG), 163–170 (CQTCHGQG), 185–192 (CPHCGGTG), and 199–206 (CSDCHGNG).

This sequence belongs to the DnaJ family. In terms of assembly, homodimer. Zn(2+) serves as cofactor.

It is found in the cytoplasm. In terms of biological role, participates actively in the response to hyperosmotic and heat shock by preventing the aggregation of stress-denatured proteins and by disaggregating proteins, also in an autonomous, DnaK-independent fashion. Unfolded proteins bind initially to DnaJ; upon interaction with the DnaJ-bound protein, DnaK hydrolyzes its bound ATP, resulting in the formation of a stable complex. GrpE releases ADP from DnaK; ATP binding to DnaK triggers the release of the substrate protein, thus completing the reaction cycle. Several rounds of ATP-dependent interactions between DnaJ, DnaK and GrpE are required for fully efficient folding. Also involved, together with DnaK and GrpE, in the DNA replication of plasmids through activation of initiation proteins. The polypeptide is Chaperone protein DnaJ (Psychrobacter arcticus (strain DSM 17307 / VKM B-2377 / 273-4)).